Consider the following 572-residue polypeptide: NADH-ubiquinone oxidoreductase chain 5 (572 aa).

Helical transmembrane passes span 4–24 (ISFVNLISMSLSCFLLSLYFL), 44–64 (IVMTFLFDWMSLLFMSFVLMI), 86–106 (IMLVLMFVLSMMLLIISPNLI), 107–127 (SILLGWDGLGLVSYCLVIYFQ), 147–167 (VALLLSIAWMLNYGSWNYIFY), 170–190 (IMQNEFEMLMIGSLVMLAAMT), 217–237 (SSTLVTAGVYLLIRFNIILST), 239–259 (WLGQLMLLLSGLTMFMAGLGA), 268–288 (IIALSTLSQLGLMMSILSMGF), 294–314 (FHLLTHALFKALLFMCAGAII), 337–357 (SACFNVSNLALCGMPFLAGFY), 372–394 (NMFSFFLYYFSTGLTVSYSFRLV), 422–442 (MGLLIMSIIGGSMLNWLIFPF), 457–477 (LFVCIVGGLFGYLISLSNLFF), 490–510 (FLGSMWFMPYISTYGMIFYPL), and 552–572 (LKIYLLLFVFWILILLILLFL).

Belongs to the complex I subunit 5 family.

It localises to the mitochondrion inner membrane. It carries out the reaction a ubiquinone + NADH + 5 H(+)(in) = a ubiquinol + NAD(+) + 4 H(+)(out). Its function is as follows. Core subunit of the mitochondrial membrane respiratory chain NADH dehydrogenase (Complex I) that is believed to belong to the minimal assembly required for catalysis. Complex I functions in the transfer of electrons from NADH to the respiratory chain. The immediate electron acceptor for the enzyme is believed to be ubiquinone. The chain is NADH-ubiquinone oxidoreductase chain 5 (mt:ND5) from Drosophila melanogaster (Fruit fly).